The sequence spans 340 residues: Guanine nucleotide-binding protein subunit beta-1 (340 aa).

WD repeat units follow at residues 53–83 (GHLA…IVWD), 95–125 (LRSS…SIYS), 141–170 (GHTG…ALWD), 182–212 (GHTG…KLWD), 224–254 (GHES…RLFD), 268–298 (NIIC…NVWD), and 310–340 (GHDN…KIWN).

This sequence belongs to the WD repeat G protein beta family. As to quaternary structure, g proteins are composed of 3 units, alpha, beta and gamma. Interacts with G protein gamma subunits gpc-1 and gpc-2 and with egl-10 and eat-16. Interacts with goa-1 (in GDP-bound form).

In terms of biological role, guanine nucleotide-binding proteins (G proteins) are involved as a modulator or transducer in various transmembrane signaling systems. The beta and gamma chains are required for the GTPase activity, for replacement of GDP by GTP, and for G protein-effector interaction. In the early embryo, controls the magnitude of the forces acting on centrosomes but is not required for generating asymmetric forces. This chain is Guanine nucleotide-binding protein subunit beta-1 (gpb-1), found in Caenorhabditis briggsae.